A 186-amino-acid chain; its full sequence is Transposons Tn1721 resolvase (186 aa).

The Resolvase/invertase-type recombinase catalytic domain occupies 4–137 (HRIGYVRVSS…EGIALAKQRG (134 aa)). Catalysis depends on Ser12, which acts as the O-(5'-phospho-DNA)-serine intermediate. The H-T-H motif DNA-binding region spans 164-183 (KAQLAREFNISRETLYQYLR).

The protein belongs to the site-specific recombinase resolvase family.

Resolvase catalyzes the resolution (a site-specific recombination) of the cointegrated replicon to yield the final transposition products. This is Transposons Tn1721 resolvase (tnpR) from Escherichia coli.